A 173-amino-acid chain; its full sequence is U1 small nuclear ribonucleoprotein C (173 aa).

Residues 4-36 (YYCDYCDTYLTHDSPSVRKTHCQGRKHKDNVKF) form a Matrin-type zinc finger. A disordered region spans residues 72–100 (AAIPPPANMQGPPRPVPPGPMGPGPNMLG). Residues 73–94 (AIPPPANMQGPPRPVPPGPMGP) show a composition bias toward pro residues.

Belongs to the U1 small nuclear ribonucleoprotein C family. As to quaternary structure, U1 snRNP is composed of the 7 core Sm proteins B/B', D1, D2, D3, E, F and G that assemble in a heptameric protein ring on the Sm site of the small nuclear RNA to form the core snRNP, and at least 3 U1 snRNP-specific proteins U1-70K, U1-A and U1-C. U1-C interacts with U1 snRNA and the 5' splice-site region of the pre-mRNA.

It localises to the nucleus. Its function is as follows. Component of the spliceosomal U1 snRNP, which is essential for recognition of the pre-mRNA 5' splice-site and the subsequent assembly of the spliceosome. U1-C is directly involved in initial 5' splice-site recognition for both constitutive and regulated alternative splicing. The interaction with the 5' splice-site seems to precede base-pairing between the pre-mRNA and the U1 snRNA. Stimulates commitment or early (E) complex formation by stabilizing the base pairing of the 5' end of the U1 snRNA and the 5' splice-site region. This chain is U1 small nuclear ribonucleoprotein C, found in Pediculus humanus subsp. corporis (Body louse).